The sequence spans 477 residues: Polyketide synthase-related protein Dhc1 (477 aa).

The region spanning 34–112 is the Carrier domain; the sequence is EKMTVREGEL…AMTHCVFDRA (79 aa). The residue at position 72 (serine 72) is an O-(pantetheine 4'-phosphoryl)serine. Residues 161–322 are ketoreductase (KR) domain; it reads LTGATSFLGS…AGEVFLENLV (162 aa). The interval 410–435 is disordered; the sequence is VQQQQQQQQRQSQPPRDDAADGSPTE. Over residues 411–422 the composition is skewed to low complexity; sequence QQQQQQQQRQSQ. Residues 424 to 435 show a composition bias toward basic and acidic residues; that stretch reads PRDDAADGSPTE.

Its pathway is mycotoxin biosynthesis. Its function is as follows. Polyketide synthase-related protein; part of the gene cluster that mediates the biosynthesis of 10,11-dehydrocurvularin, a prevalent fungal phytotoxin with heat shock response and immune-modulatory activities. The highly reducing polyketide synthase Dhc3 is responsible for biosynthesis up to the tetraketide stage. The non-reducing polyketide synthase Dhc5 then conducts four additional chain extension cycles, producing the unreduced part of the nascent octaketide from C-1 to C-8 in 10,11-dehydrocurvularin. The role of Dhc1 in 10,11-dehydrocurvularin biosynthesis has not been identified yet. The sequence is that of Polyketide synthase-related protein Dhc1 from Alternaria cinerariae.